The following is a 120-amino-acid chain: Large ribosomal subunit protein bL20 (120 aa).

The protein belongs to the bacterial ribosomal protein bL20 family.

Functionally, binds directly to 23S ribosomal RNA and is necessary for the in vitro assembly process of the 50S ribosomal subunit. It is not involved in the protein synthesizing functions of that subunit. This chain is Large ribosomal subunit protein bL20, found in Chlamydia abortus (strain DSM 27085 / S26/3) (Chlamydophila abortus).